The primary structure comprises 329 residues: 7,8-didemethyl-8-hydroxy-5-deazariboflavin synthase (329 aa).

In terms of domain architecture, Radical SAM core spans M1–N235. Residues C9, C13, and C16 each contribute to the [4Fe-4S] cluster site.

The protein belongs to the radical SAM superfamily. CofG family. As to quaternary structure, consists of two subunits, CofG and CofH. The cofactor is [4Fe-4S] cluster.

The catalysed reaction is 5-amino-5-(4-hydroxybenzyl)-6-(D-ribitylimino)-5,6-dihydrouracil + S-adenosyl-L-methionine = 7,8-didemethyl-8-hydroxy-5-deazariboflavin + 5'-deoxyadenosine + L-methionine + NH4(+) + H(+). The protein operates within cofactor biosynthesis; coenzyme F0 biosynthesis. Its function is as follows. Catalyzes the radical-mediated synthesis of 7,8-didemethyl-8-hydroxy-5-deazariboflavin from 5-amino-5-(4-hydroxybenzyl)-6-(D-ribitylimino)-5,6-dihydrouracil. This is 7,8-didemethyl-8-hydroxy-5-deazariboflavin synthase from Methanosarcina acetivorans (strain ATCC 35395 / DSM 2834 / JCM 12185 / C2A).